We begin with the raw amino-acid sequence, 75 residues long: MEQVQQAIDQHLVELEQLFKMLMDVRVALGGVTVVQVNEMRTFVISASAAAQRLRALARRYPAPLAVAAEPMETE.

The protein is Protein B of Dicentrarchus labrax (European seabass).